We begin with the raw amino-acid sequence, 195 residues long: Protein hunchback (195 aa).

3 disordered regions span residues 16-57 (SHHH…SHTN), 64-83 (LKQQQQQQQQHQHQQQQQPM), and 155-195 (LTPP…KYMA). Positions 17–29 (HHHHHHHAHHSHH) are enriched in basic residues. Low complexity-rich tracts occupy residues 33–44 (SNSNSNASSPHQ) and 66–81 (QQQQQQQQHQHQQQQQ). Residues 176 to 195 (EPEKEHDLMSNSSEDMKYMA) are compositionally biased toward basic and acidic residues.

It belongs to the hunchback C2H2-type zinc-finger protein family.

Its subcellular location is the nucleus. Functionally, gap class segmentation protein that controls development of head structures. This Drosophila dasycnemia (Fruit fly) protein is Protein hunchback (hb).